A 244-amino-acid polypeptide reads, in one-letter code: Inner kinetochore subunit fta7 (244 aa).

This sequence belongs to the CENP-Q/OKP1 family. Component of the heterotetrameric kinetochore subcomplex COMA, which consists of fta2, fta7, mal2 and mis17. The COMA subcomplex is part of a larger constitutive centromere-associated network (CCAN) (also known as central kinetochore Sim4 complex in fission yeast), which is composed of at least cnl2, cnp3, cnp20, fta1, fta2, fta3, fta4, fta6, fta7, mal2, mhf1, mhf2, mis6, mis15, mis17, sim4 and wip1.

It is found in the nucleus. Its subcellular location is the chromosome. The protein localises to the centromere. The protein resides in the kinetochore. It localises to the cytoplasm. It is found in the cytoskeleton. Its subcellular location is the microtubule organizing center. The protein localises to the spindle pole body. In terms of biological role, component of the kinetochore, a multiprotein complex that assembles on centromeric DNA and attaches chromosomes to spindle microtubules, mediating chromosome segregation and sister chromatid segregation during meiosis and mitosis. Component of the inner kinetochore COMA complex, which connects centromere-associated proteins and the outer kinetochore. COMA interacts with other inner kinetochore proteins to form the inner kinetochore constitutive centromere-associated network (CCAN), which serves as a structural platform for outer kinetochore assembly. This Schizosaccharomyces pombe (strain 972 / ATCC 24843) (Fission yeast) protein is Inner kinetochore subunit fta7 (fta7).